The sequence spans 678 residues: RNA helicase NPH-II (678 aa).

The Helicase ATP-binding domain occupies 175-351 (FTSWARRVPV…EFFAESVFVH (177 aa)). ATP is bound at residue 188–195 (GDTGVGKT). A DEXH box motif is present at residues 300 to 303 (DEVH). One can recognise a Helicase C-terminal domain in the interval 371–546 (PLNRFMYIEE…VFDLQLPEDL (176 aa)).

The protein belongs to the DEAD box helicase family. DEAH subfamily. Monomer.

The protein resides in the virion. It catalyses the reaction ATP + H2O = ADP + phosphate + H(+). Functionally, NTP-dependent helicase that catalyzes unidirectional unwinding of 3'tailed duplex RNAs and plays an important role during transcription of early mRNAs, presumably by preventing R-loop formation behind the elongating RNA polymerase. Might also play a role in the export of newly synthesized mRNA chains out of the core into the cytoplasm. Required for replication and propagation of viral particles. This Oryctolagus cuniculus (Rabbit) protein is RNA helicase NPH-II (OPG084).